The sequence spans 206 residues: Ion-translocating oxidoreductase complex subunit G (206 aa).

A helical membrane pass occupies residues 9-29 (GITLALFAAGSTGLTAVINQM). FMN phosphoryl threonine is present on Thr-174.

Belongs to the RnfG family. In terms of assembly, the complex is composed of six subunits: RsxA, RsxB, RsxC, RsxD, RsxE and RsxG. FMN serves as cofactor.

Its subcellular location is the cell inner membrane. Functionally, part of a membrane-bound complex that couples electron transfer with translocation of ions across the membrane. Required to maintain the reduced state of SoxR. This chain is Ion-translocating oxidoreductase complex subunit G, found in Salmonella typhimurium (strain LT2 / SGSC1412 / ATCC 700720).